We begin with the raw amino-acid sequence, 325 residues long: GMP reductase (325 aa).

Cys173 (thioimidate intermediate) is an active-site residue. Position 202–225 (202–225) interacts with NADP(+); that stretch reads IIADGGIRSHGDIAKSVRFGATMV.

The protein belongs to the IMPDH/GMPR family. GuaC type 2 subfamily.

It carries out the reaction IMP + NH4(+) + NADP(+) = GMP + NADPH + 2 H(+). Catalyzes the irreversible NADPH-dependent deamination of GMP to IMP. It functions in the conversion of nucleobase, nucleoside and nucleotide derivatives of G to A nucleotides, and in maintaining the intracellular balance of A and G nucleotides. This Acidovorax ebreus (strain TPSY) (Diaphorobacter sp. (strain TPSY)) protein is GMP reductase.